The sequence spans 703 residues: Glycogen [starch] synthase, liver (703 aa).

Residue Ser8 is modified to Phosphoserine; by PKA. Residue Ser11 is modified to Phosphoserine. Residue Lys40 coordinates UDP. Residues His205 and Arg211 each contribute to the UDP-alpha-D-glucose site. His291, Glu292, Gln294, His297, and Lys301 together coordinate alpha-D-glucose 6-phosphate. Position 331 (Arg331) interacts with UDP. Arg331 is a binding site for UDP-alpha-D-glucose. His501 serves as a coordination point for alpha-D-glucose 6-phosphate. Glu510, Trp512, and Gly513 together coordinate UDP-alpha-D-glucose. Thr515 is a binding site for UDP. Residues Arg582 and Arg586 each contribute to the alpha-D-glucose 6-phosphate site. Ser627 bears the Phosphoserine mark. Residues 628-703 (PPTTEGFKYP…KKKLHGEYKN (76 aa)) form a disordered region. Phosphoserine; by GSK3-alpha and GSK3-beta occurs at positions 641, 645, 649, and 653. A compositionally biased stretch (low complexity) spans 647–657 (SGSQASSPQSS). The residue at position 657 (Ser657) is a Phosphoserine; by CK2. Acidic residues predominate over residues 658–674 (DVEDEVEDERYDEEEEA). Ser683 is modified (phosphoserine).

It belongs to the glycosyltransferase 3 family. In terms of assembly, part of the glycogen synthase (GS)-glycogenin complex, a heterooctamer composed of a tetramer of GS and 2 dimers of glycogenin, where each GS protomer binds to one glycogenin subunit (via glycogenin C-terminus); the GS tetramer may dissociate from glycogenin dimers to continue glycogen polymerization on its own. May also form a heterooctamer complex with GYG1 (via GYG1 C-terminus). Post-translationally, primed phosphorylation at Ser-657 (site 5) by CSNK2A1 and CSNK2A2 is required for inhibitory phosphorylation at Ser-641 (site 3a), Ser-645 (site 3b), Ser-649 (site 3c) and Ser-653 (site 4) by GSK3A an GSK3B. Dephosphorylation at Ser-641 and Ser-645 by PP1 activates the enzyme. Phosphorylation at Ser-8 is not required for interaction with GYG1. Interaction with GYG1 does not regulate the phosphorylation at Ser-8 and Ser-641. Specifically expressed in liver (at protein level).

The enzyme catalyses [(1-&gt;4)-alpha-D-glucosyl](n) + UDP-alpha-D-glucose = [(1-&gt;4)-alpha-D-glucosyl](n+1) + UDP + H(+). Its pathway is glycan biosynthesis; glycogen biosynthesis. Allosteric activation by glucose-6-phosphate. Phosphorylation reduces the activity towards UDP-glucose. When in the non-phosphorylated state, glycogen synthase does not require glucose-6-phosphate as an allosteric activator; when phosphorylated it does. In terms of biological role, glycogen synthase participates in the glycogen biosynthetic process along with glycogenin and glycogen branching enzyme. Extends the primer composed of a few glucose units formed by glycogenin by adding new glucose units to it. In this context, glycogen synthase transfers the glycosyl residue from UDP-Glc to the non-reducing end of alpha-1,4-glucan. The chain is Glycogen [starch] synthase, liver from Homo sapiens (Human).